The chain runs to 241 residues: Large ribosomal subunit protein uL30 (241 aa).

Residues 1 to 32 are disordered; it reads MATTLKPETLQKKEKAQQKTAEERAAAKKVRK. The span at 9–26 shows a compositional bias: basic and acidic residues; it reads TLQKKEKAQQKTAEERAA.

It belongs to the universal ribosomal protein uL30 family. Component of the large ribosomal subunit. Mature ribosomes consist of a small (40S) and a large (60S) subunit. The 40S subunit contains about 32 different proteins and 1 molecule of RNA (18S). The 60S subunit contains 45 different proteins and 3 molecules of RNA (25S, 5.8S and 5S).

The protein resides in the cytoplasm. Its function is as follows. Component of the ribosome, a large ribonucleoprotein complex responsible for the synthesis of proteins in the cell. The small ribosomal subunit (SSU) binds messenger RNAs (mRNAs) and translates the encoded message by selecting cognate aminoacyl-transfer RNA (tRNA) molecules. The large subunit (LSU) contains the ribosomal catalytic site termed the peptidyl transferase center (PTC), which catalyzes the formation of peptide bonds, thereby polymerizing the amino acids delivered by tRNAs into a polypeptide chain. The nascent polypeptides leave the ribosome through a tunnel in the LSU and interact with protein factors that function in enzymatic processing, targeting, and the membrane insertion of nascent chains at the exit of the ribosomal tunnel. This is Large ribosomal subunit protein uL30 from Candida albicans (strain SC5314 / ATCC MYA-2876) (Yeast).